Reading from the N-terminus, the 117-residue chain is Hydrogenase maturation factor HypA (117 aa).

His2 lines the Ni(2+) pocket. Zn(2+) is bound by residues Cys73, Cys76, Cys89, and Cys92.

Belongs to the HypA/HybF family.

In terms of biological role, involved in the maturation of [NiFe] hydrogenases. Required for nickel insertion into the metal center of the hydrogenase. The sequence is that of Hydrogenase maturation factor HypA from Shewanella baltica (strain OS185).